The primary structure comprises 237 residues: Synapse differentiation-inducing gene protein 1-like (237 aa).

Disordered stretches follow at residues 1 to 23, 84 to 111, and 127 to 148; these read MESL…HRPY, AGSC…PGQA, and ELQG…ESEC. Residues 1-161 lie on the Extracellular side of the membrane; it reads MESLSELQNP…FLTLPPRDHL (161 aa). The span at 129-148 shows a compositional bias: acidic residues; that stretch reads QGQEDSQEEESDGTSSESEC. Residues 162-182 form a helical membrane-spanning segment; the sequence is GLTLFSMLCCFWPLGIAAFYF. Residues 183–204 are Cytoplasmic-facing; that stretch reads SQGTSKAISKGDFRLASTTSRR. Residues 205 to 225 traverse the membrane as a helical segment; the sequence is ALFLATLSIAVGAGLYVAVVV. At 226-237 the chain is on the extracellular side; sequence ALAAYMSQNGHG.

The protein belongs to the CD225/Dispanin family. In terms of tissue distribution, expression is restricted to the caudate-putamen. Down-regulated in R6/2 transgenic mice, a model for Huntington disease.

Its subcellular location is the membrane. It is found in the golgi apparatus. The protein localises to the cis-Golgi network. This chain is Synapse differentiation-inducing gene protein 1-like (Syndig1l), found in Mus musculus (Mouse).